Here is a 171-residue protein sequence, read N- to C-terminus: Large ribosomal subunit protein uL10 (171 aa).

The protein belongs to the universal ribosomal protein uL10 family. Part of the ribosomal stalk of the 50S ribosomal subunit. The N-terminus interacts with L11 and the large rRNA to form the base of the stalk. The C-terminus forms an elongated spine to which L12 dimers bind in a sequential fashion forming a multimeric L10(L12)X complex.

Functionally, forms part of the ribosomal stalk, playing a central role in the interaction of the ribosome with GTP-bound translation factors. The chain is Large ribosomal subunit protein uL10 from Lactococcus lactis subsp. cremoris (strain SK11).